The chain runs to 91 residues: MRRVLIRVKGKVQGVCFRRFALERARELGVTGYVTNMDDGSVQILAQGSAPLVEKLIDWCWEGSPAASVNAVEVNEDEADEIYLDFSITQS.

An Acylphosphatase-like domain is found at 3–90; the sequence is RVLIRVKGKV…EIYLDFSITQ (88 aa). Residues Arg18 and Asn36 contribute to the active site.

This sequence belongs to the acylphosphatase family.

It catalyses the reaction an acyl phosphate + H2O = a carboxylate + phosphate + H(+). In Shewanella amazonensis (strain ATCC BAA-1098 / SB2B), this protein is Acylphosphatase (acyP).